Here is a 429-residue protein sequence, read N- to C-terminus: 3-isopropylmalate dehydratase large subunit (429 aa).

[4Fe-4S] cluster contacts are provided by Cys303, Cys363, and Cys366.

This sequence belongs to the aconitase/IPM isomerase family. LeuC type 2 subfamily. As to quaternary structure, heterodimer of LeuC and LeuD. [4Fe-4S] cluster is required as a cofactor.

The catalysed reaction is (2R,3S)-3-isopropylmalate = (2S)-2-isopropylmalate. It participates in amino-acid biosynthesis; L-leucine biosynthesis; L-leucine from 3-methyl-2-oxobutanoate: step 2/4. Functionally, catalyzes the isomerization between 2-isopropylmalate and 3-isopropylmalate, via the formation of 2-isopropylmaleate. This Caldicellulosiruptor saccharolyticus (strain ATCC 43494 / DSM 8903 / Tp8T 6331) protein is 3-isopropylmalate dehydratase large subunit.